The primary structure comprises 291 residues: 2-C-methyl-D-erythritol 4-phosphate cytidylyltransferase (291 aa).

A disordered region spans residues 1–23; the sequence is MTERDFDTPVETPTVQPAPAQGA.

The protein belongs to the IspD/TarI cytidylyltransferase family. IspD subfamily.

It catalyses the reaction 2-C-methyl-D-erythritol 4-phosphate + CTP + H(+) = 4-CDP-2-C-methyl-D-erythritol + diphosphate. It functions in the pathway isoprenoid biosynthesis; isopentenyl diphosphate biosynthesis via DXP pathway; isopentenyl diphosphate from 1-deoxy-D-xylulose 5-phosphate: step 2/6. Its function is as follows. Catalyzes the formation of 4-diphosphocytidyl-2-C-methyl-D-erythritol from CTP and 2-C-methyl-D-erythritol 4-phosphate (MEP). This chain is 2-C-methyl-D-erythritol 4-phosphate cytidylyltransferase, found in Bifidobacterium longum (strain NCC 2705).